Reading from the N-terminus, the 108-residue chain is FK506-binding protein 1 (108 aa).

The PPIase FKBP-type domain occupies 20 to 108 (GDAVTIHYVG…VFDVELLGIN (89 aa)).

The protein belongs to the FKBP-type PPIase family. FKBP1 subfamily.

It is found in the cytoplasm. The enzyme catalyses [protein]-peptidylproline (omega=180) = [protein]-peptidylproline (omega=0). Inhibited by both FK506 and rapamycin. In terms of biological role, PPIases accelerate the folding of proteins. It catalyzes the cis-trans isomerization of proline imidic peptide bonds in oligopeptides. This is FK506-binding protein 1 (FPR1) from Yarrowia lipolytica (strain CLIB 122 / E 150) (Yeast).